Reading from the N-terminus, the 452-residue chain is Tryptophan biosynthesis protein TrpCF (452 aa).

The tract at residues 1-256 (MQTVLAKIVA…AAVRRVLLGE (256 aa)) is indole-3-glycerol phosphate synthase. Residues 257–452 (NKVCGLTRAQ…ASVFQTLRAY (196 aa)) are N-(5'-phosphoribosyl)anthranilate isomerase.

It in the N-terminal section; belongs to the TrpC family. This sequence in the C-terminal section; belongs to the TrpF family. As to quaternary structure, monomer.

The catalysed reaction is N-(5-phospho-beta-D-ribosyl)anthranilate = 1-(2-carboxyphenylamino)-1-deoxy-D-ribulose 5-phosphate. It catalyses the reaction 1-(2-carboxyphenylamino)-1-deoxy-D-ribulose 5-phosphate + H(+) = (1S,2R)-1-C-(indol-3-yl)glycerol 3-phosphate + CO2 + H2O. The protein operates within amino-acid biosynthesis; L-tryptophan biosynthesis; L-tryptophan from chorismate: step 3/5. It functions in the pathway amino-acid biosynthesis; L-tryptophan biosynthesis; L-tryptophan from chorismate: step 4/5. Functionally, bifunctional enzyme that catalyzes two sequential steps of tryptophan biosynthetic pathway. The first reaction is catalyzed by the isomerase, coded by the TrpF domain; the second reaction is catalyzed by the synthase, coded by the TrpC domain. The sequence is that of Tryptophan biosynthesis protein TrpCF (trpC) from Salmonella typhimurium (strain LT2 / SGSC1412 / ATCC 700720).